A 378-amino-acid chain; its full sequence is Lipid-A-disaccharide synthase (378 aa).

Belongs to the LpxB family.

The enzyme catalyses a lipid X + a UDP-2-N,3-O-bis[(3R)-3-hydroxyacyl]-alpha-D-glucosamine = a lipid A disaccharide + UDP + H(+). It functions in the pathway bacterial outer membrane biogenesis; LPS lipid A biosynthesis. Condensation of UDP-2,3-diacylglucosamine and 2,3-diacylglucosamine-1-phosphate to form lipid A disaccharide, a precursor of lipid A, a phosphorylated glycolipid that anchors the lipopolysaccharide to the outer membrane of the cell. This is Lipid-A-disaccharide synthase from Methylobacillus flagellatus (strain ATCC 51484 / DSM 6875 / VKM B-1610 / KT).